Consider the following 62-residue polypeptide: Conorfamide-Tx1 (62 aa).

The N-terminal stretch at 1-19 (MSGRGFLLLALLLLVTVEA) is a signal peptide. A propeptide spanning residues 20–26 (TKVEKNK) is cleaved from the precursor. Tyr-46 is subject to Tyrosine amide. Positions 47 to 62 (GRRDMQSPLLSERLRF) are excised as a propeptide.

This sequence belongs to the FARP (FMRFamide related peptide) family. As to expression, expressed by the venom duct.

Its subcellular location is the secreted. In terms of biological role, this peptide does not show activity on human and mouse sensory neuron-specific G-protein coupled receptors MRGPRX1. In Conus textile (Cloth-of-gold cone), this protein is Conorfamide-Tx1.